The chain runs to 267 residues: N-acetylgalactosamine permease IIC component 1 (267 aa).

The Periplasmic segment spans residues 1–10 (MHEITLLQGL). Residues 1–237 (MHEITLLQGL…VAVLGAGFAV (237 aa)) form the PTS EIIC type-4 domain. The helical transmembrane segment at 11 to 31 (SLAALVFVLGIDFWLEALFLF) threads the bilayer. Residues 32–33 (RP) are Cytoplasmic-facing. The helical transmembrane segment at 34 to 54 (IIVCTLTGAILGDIQTGLITG) threads the bilayer. Residues 55–66 (GLTELAFAGLTP) lie on the Periplasmic side of the membrane. The helical transmembrane segment at 67-87 (AGGVQPPNPIMAGLMTTVIAW) threads the bilayer. Residues 88–94 (STGVDAK) lie on the Cytoplasmic side of the membrane. The chain crosses the membrane as a helical span at residues 95-115 (TAIGLGLPFSLLMQYVILFFY). Topologically, residues 116–141 (SAFSLFMTKADKCAKEADTAAFSRLN) are periplasmic. Residues 142–162 (WTTMLIVASAYAVIAFLCTYL) form a helical membrane-spanning segment. The Cytoplasmic portion of the chain corresponds to 163–177 (AQGAMQALVKAMPAW). Residues 178–198 (LTHGFEVAGGILPAVGFGLLL) traverse the membrane as a helical segment. Residues 199-209 (RVMFKAQYIPY) lie on the Periplasmic side of the membrane. Residues 210–230 (LIAGFLFVCYIQVSNLLPVAV) traverse the membrane as a helical segment. The Cytoplasmic segment spans residues 231–267 (LGAGFAVYEFFNAKSRQQAQPQPVASKNEEEDYSNGI).

The protein localises to the cell inner membrane. Functionally, the phosphoenolpyruvate-dependent sugar phosphotransferase system (PTS), a major carbohydrate active -transport system, catalyzes the phosphorylation of incoming sugar substrates concomitant with their translocation across the cell membrane. This system is involved in N-acetylgalactosamine transport. This chain is N-acetylgalactosamine permease IIC component 1 (agaC), found in Escherichia coli (strain K12).